The sequence spans 142 residues: Large ribosomal subunit protein uL11 (142 aa).

The protein belongs to the universal ribosomal protein uL11 family. In terms of assembly, part of the ribosomal stalk of the 50S ribosomal subunit. Interacts with L10 and the large rRNA to form the base of the stalk. L10 forms an elongated spine to which L12 dimers bind in a sequential fashion forming a multimeric L10(L12)X complex. Post-translationally, one or more lysine residues are methylated.

Its function is as follows. Forms part of the ribosomal stalk which helps the ribosome interact with GTP-bound translation factors. The chain is Large ribosomal subunit protein uL11 from Mycobacteroides abscessus (strain ATCC 19977 / DSM 44196 / CCUG 20993 / CIP 104536 / JCM 13569 / NCTC 13031 / TMC 1543 / L948) (Mycobacterium abscessus).